A 207-amino-acid chain; its full sequence is Guanylate kinase (207 aa).

The Guanylate kinase-like domain occupies 4–184 (GLLFIVSAPS…AVSDLYKIIR (181 aa)). 11 to 18 (APSGTGKS) contributes to the ATP binding site.

This sequence belongs to the guanylate kinase family.

The protein localises to the cytoplasm. The enzyme catalyses GMP + ATP = GDP + ADP. Its function is as follows. Essential for recycling GMP and indirectly, cGMP. The polypeptide is Guanylate kinase (Buchnera aphidicola subsp. Baizongia pistaciae (strain Bp)).